We begin with the raw amino-acid sequence, 240 residues long: MKNKSVEMLIEGAKEWGIFLEMFHVEHFQKYYALLLEWNQKMNLTAITEESEVVIKHFLDSLSVVKSGKIKEEEKIIDVGTGAGFPCIPLKIVFPKLKATLLDSSKKRITFLEEVINKLGINEIELIHGRAEDIGKDIKYREQFDLSVARAVAPLNILLEYTLPFVKVDGYFIALKGREIEEEIENSQRALKELKGEIEEVKEIKLPYSDIVHHLVIIKKIDNCPTKYPRRANAIQRSPL.

S-adenosyl-L-methionine is bound by residues glycine 80, phenylalanine 85, 103-105 (DSS), 131-132 (AE), and arginine 150.

The protein belongs to the methyltransferase superfamily. RNA methyltransferase RsmG family.

The protein resides in the cytoplasm. In terms of biological role, specifically methylates the N7 position of a guanine in 16S rRNA. This is Ribosomal RNA small subunit methyltransferase G from Thermoanaerobacter sp. (strain X514).